The sequence spans 243 residues: Orotidine 5'-phosphate decarboxylase (243 aa).

Substrate is bound by residues Asp-19, Lys-41, 69-78 (DLKFFDIPAT), Thr-124, Arg-185, Gln-194, Gly-214, and Arg-215. Residue Lys-71 is the Proton donor of the active site.

It belongs to the OMP decarboxylase family. Type 1 subfamily. Homodimer.

The catalysed reaction is orotidine 5'-phosphate + H(+) = UMP + CO2. It participates in pyrimidine metabolism; UMP biosynthesis via de novo pathway; UMP from orotate: step 2/2. Catalyzes the decarboxylation of orotidine 5'-monophosphate (OMP) to uridine 5'-monophosphate (UMP). The chain is Orotidine 5'-phosphate decarboxylase from Xanthomonas campestris pv. campestris (strain 8004).